A 484-amino-acid chain; its full sequence is N-succinylglutamate 5-semialdehyde dehydrogenase (484 aa).

NAD(+) is bound at residue 221–226 (GSAAAG). Residues glutamate 244 and cysteine 278 contribute to the active site.

Belongs to the aldehyde dehydrogenase family. AstD subfamily.

The enzyme catalyses N-succinyl-L-glutamate 5-semialdehyde + NAD(+) + H2O = N-succinyl-L-glutamate + NADH + 2 H(+). It participates in amino-acid degradation; L-arginine degradation via AST pathway; L-glutamate and succinate from L-arginine: step 4/5. In terms of biological role, catalyzes the NAD-dependent reduction of succinylglutamate semialdehyde into succinylglutamate. The protein is N-succinylglutamate 5-semialdehyde dehydrogenase of Caulobacter sp. (strain K31).